The following is a 132-amino-acid chain: Small ribosomal subunit protein uS8 (132 aa).

This sequence belongs to the universal ribosomal protein uS8 family. As to quaternary structure, part of the 30S ribosomal subunit. Contacts proteins S5 and S12.

Its function is as follows. One of the primary rRNA binding proteins, it binds directly to 16S rRNA central domain where it helps coordinate assembly of the platform of the 30S subunit. This is Small ribosomal subunit protein uS8 from Afipia carboxidovorans (strain ATCC 49405 / DSM 1227 / KCTC 32145 / OM5) (Oligotropha carboxidovorans).